We begin with the raw amino-acid sequence, 273 residues long: Diaminopimelate epimerase (273 aa).

Residues Asn11 and Asn60 each coordinate substrate. Cys69 functions as the Proton donor in the catalytic mechanism. Substrate is bound by residues 70–71, Asn181, and 199–200; these read GN and ER. Cys209 acts as the Proton acceptor in catalysis. 210–211 is a binding site for substrate; that stretch reads GT.

This sequence belongs to the diaminopimelate epimerase family. In terms of assembly, homodimer.

The protein localises to the cytoplasm. It carries out the reaction (2S,6S)-2,6-diaminopimelate = meso-2,6-diaminopimelate. It functions in the pathway amino-acid biosynthesis; L-lysine biosynthesis via DAP pathway; DL-2,6-diaminopimelate from LL-2,6-diaminopimelate: step 1/1. Functionally, catalyzes the stereoinversion of LL-2,6-diaminopimelate (L,L-DAP) to meso-diaminopimelate (meso-DAP), a precursor of L-lysine and an essential component of the bacterial peptidoglycan. The polypeptide is Diaminopimelate epimerase (Helicobacter pylori (strain Shi470)).